The following is a 194-amino-acid chain: UPF0301 protein FTA_1286 (194 aa).

Belongs to the UPF0301 (AlgH) family.

The polypeptide is UPF0301 protein FTA_1286 (Francisella tularensis subsp. holarctica (strain FTNF002-00 / FTA)).